The primary structure comprises 212 residues: Thymidylate kinase (212 aa).

15 to 22 (GIDGAGKS) contacts ATP.

It belongs to the thymidylate kinase family.

It carries out the reaction dTMP + ATP = dTDP + ADP. Phosphorylation of dTMP to form dTDP in both de novo and salvage pathways of dTTP synthesis. The sequence is that of Thymidylate kinase from Chromobacterium violaceum (strain ATCC 12472 / DSM 30191 / JCM 1249 / CCUG 213 / NBRC 12614 / NCIMB 9131 / NCTC 9757 / MK).